The chain runs to 353 residues: Peptide chain release factor 1 (353 aa).

Glutamine 230 bears the N5-methylglutamine mark.

This sequence belongs to the prokaryotic/mitochondrial release factor family. Methylated by PrmC. Methylation increases the termination efficiency of RF1.

It localises to the cytoplasm. Its function is as follows. Peptide chain release factor 1 directs the termination of translation in response to the peptide chain termination codons UAG and UAA. The protein is Peptide chain release factor 1 of Leptospira biflexa serovar Patoc (strain Patoc 1 / ATCC 23582 / Paris).